The chain runs to 309 residues: Putative glycosyltransferase 48 (309 aa).

It belongs to the glycosyltransferase group 1 family. Glycosyltransferase 4 subfamily.

This chain is Putative glycosyltransferase 48 (SIFV0048), found in Saccharolobus islandicus (Sulfolobus islandicus).